The chain runs to 111 residues: Cytochrome c (111 aa).

A1 carries the post-translational modification N-acetylalanine. Heme c-binding residues include C22, C25, and H26. N6,N6,N6-trimethyllysine is present on K80. Residue M88 coordinates heme c. Residue K94 is modified to N6,N6,N6-trimethyllysine.

Belongs to the cytochrome c family. In terms of processing, binds 1 heme c group covalently per subunit.

The protein localises to the mitochondrion intermembrane space. In terms of biological role, electron carrier protein. The oxidized form of the cytochrome c heme group can accept an electron from the heme group of the cytochrome c1 subunit of cytochrome reductase. Cytochrome c then transfers this electron to the cytochrome oxidase complex, the final protein carrier in the mitochondrial electron-transport chain. The polypeptide is Cytochrome c (Cucurbita maxima (Pumpkin)).